Here is a 275-residue protein sequence, read N- to C-terminus: NH(3)-dependent NAD(+) synthetase (275 aa).

Residue 46-53 (GISGGQDS) coordinates ATP. Residue Asp52 participates in Mg(2+) binding. Arg140 is a deamido-NAD(+) binding site. Position 160 (Thr160) interacts with ATP. Glu165 is a Mg(2+) binding site. 2 residues coordinate deamido-NAD(+): Lys173 and Asp180. The ATP site is built by Lys189 and Thr211. 260 to 261 (HK) is a binding site for deamido-NAD(+).

Belongs to the NAD synthetase family. Homodimer.

The enzyme catalyses deamido-NAD(+) + NH4(+) + ATP = AMP + diphosphate + NAD(+) + H(+). Its pathway is cofactor biosynthesis; NAD(+) biosynthesis; NAD(+) from deamido-NAD(+) (ammonia route): step 1/1. In terms of biological role, catalyzes the ATP-dependent amidation of deamido-NAD to form NAD. Uses ammonia as a nitrogen source. This is NH(3)-dependent NAD(+) synthetase from Salmonella paratyphi A (strain ATCC 9150 / SARB42).